A 286-amino-acid polypeptide reads, in one-letter code: UDP-3-O-acyl-N-acetylglucosamine deacetylase (286 aa).

His-79, His-237, and Asp-241 together coordinate Zn(2+). His-264 (proton donor) is an active-site residue.

Belongs to the LpxC family. The cofactor is Zn(2+).

It catalyses the reaction a UDP-3-O-[(3R)-3-hydroxyacyl]-N-acetyl-alpha-D-glucosamine + H2O = a UDP-3-O-[(3R)-3-hydroxyacyl]-alpha-D-glucosamine + acetate. Its pathway is glycolipid biosynthesis; lipid IV(A) biosynthesis; lipid IV(A) from (3R)-3-hydroxytetradecanoyl-[acyl-carrier-protein] and UDP-N-acetyl-alpha-D-glucosamine: step 2/6. In terms of biological role, catalyzes the hydrolysis of UDP-3-O-myristoyl-N-acetylglucosamine to form UDP-3-O-myristoylglucosamine and acetate, the committed step in lipid A biosynthesis. The polypeptide is UDP-3-O-acyl-N-acetylglucosamine deacetylase (Chlamydia trachomatis serovar A (strain ATCC VR-571B / DSM 19440 / HAR-13)).